Consider the following 596-residue polypeptide: Sphingomyelinase C 1 (596 aa).

Residues 1–36 (MITKRNIPCKKNWKYKKKSISLTLITICYMFLFLTS) form the signal peptide. Positions 63 to 118 (KIEDSTNTDPSSNVNEEDENSINANANDNAPSDSDSSNPRSPDKNPVNPTSPNSSS) are disordered. A compositionally biased stretch (polar residues) spans 67-76 (STNTDPSSNV). The segment covering 83–118 (SINANANDNAPSDSDSSNPRSPDKNPVNPTSPNSSS) has biased composition (low complexity).

It localises to the secreted. It catalyses the reaction a sphingomyelin + H2O = phosphocholine + an N-acylsphing-4-enine + H(+). The sequence is that of Sphingomyelinase C 1 (sph1) from Leptospira interrogans serogroup Icterohaemorrhagiae serovar copenhageni (strain Fiocruz L1-130).